The chain runs to 1250 residues: MPKIVQAGRRQRLSFSRIDEVLEMPNLIELQRNSYQWFLREGLQEMFQDISPIQDFTGNLVLEFIDYSLGEPKYSIEECKERDVTYAAPLRVRVRLINKETGEVKEQEVFMGDFPLMTPTGTFIINGAERVIVSQLVRSPGVYFSEQIDPSGKKLFFATMIPNRGAWLEFESDVNDVIYVRVDRTRKLPATVLLRALGFGSDQEILDAVGDSEYIRRTLEKDSTESEEEALIEIYKRLRPGEPPAADNARQLLETLFFEPKRYDLMHVGRYRLNKKLALKRRIVGTSTVDRVVHPETGEVLAEAGVQIDKRLAEKIDEAGVDALTVRLRDGGIVRVVANGRPDIRVKTIVRQDIVAVINYMVSLFKGLGSVDDIDHLGNRRVRSVGELLQNQFRIGLARMERVIKERMTIQDVDIITPQALINIRPVVAAVKEFFGSSQLSQFMDQTNPLAELTNKRRLSALGPGGLSRERAGYEVRDVHTSHYGRMCPIETPEGPNIGLIGALATFARINEYGFIETPYRKVDQESGRVTDEIVYLTADEEDENIIAQANEPLNPDGTFARDRVTCRYRDEILQVPPSQVDYMDVSPKQVVSIATALIPFLENDDASRALMGSNMQRQAVPLLRTEAPYVGTGMEYRSAWDSGVCVIAENDGVVLRATASEVVVQYDDMQVKKYKLTKFTRSNQGTCMNQKPIVRAGDRVRKGDVIADGPSTDQGELALGRNVLVAYMCYEGYNYEDAIIINERLVREDVFTSIHIEEHECEARDTKLGPEEITRDIPNVGEDVLKDLDERGIIRIGAEVRPGDILVGKVTPKGETELTAEERLLRAIFGEKAREVRDTSLRVPHGESGIVVDVKVFTRENGDELSPGVNELVRVYMAQKRKISQGDKMAGRHGNKGVISVIVPEEDMPFMPDGTPIDIILTPLGVPSRMNIGQIMEIHLGWAAKTLGMYVASPVFDGANEQDIREMLLKAHLPPNGKTVLYDGKTGEPFDNEVTVGYKYMLKLHHLVDDKIHARSTGPYSLVTQQPLGGKAQFGGQRFGEMEVWALEAYGAAYTLQELLTVKSDDVVGRVKTYEAIVKGENVPEPGVPESFKVLIKELQSLALDVKVLDESGNEIELRELDDEMDLSDRDLEIPTLGGAELAKPAPDAQAGEESGEAGEESEGEPEEEDVEEIDVPLDPEELEKVAGALKNPVRAGRRGAGGGLADDDQEMDEEDLFDEGDEDLADDVGLYRGRSRRLADDFGDEEEE.

The disordered stretch occupies residues 1139-1226 (GGAELAKPAP…DLFDEGDEDL (88 aa)). 2 stretches are compositionally biased toward acidic residues: residues 1155 to 1183 (ESGEAGEESEGEPEEEDVEEIDVPLDPEE) and 1207 to 1226 (ADDDQEMDEEDLFDEGDEDL).

Belongs to the RNA polymerase beta chain family. In terms of assembly, the RNAP catalytic core consists of 2 alpha, 1 beta, 1 beta' and 1 omega subunit. When a sigma factor is associated with the core the holoenzyme is formed, which can initiate transcription.

The enzyme catalyses RNA(n) + a ribonucleoside 5'-triphosphate = RNA(n+1) + diphosphate. DNA-dependent RNA polymerase catalyzes the transcription of DNA into RNA using the four ribonucleoside triphosphates as substrates. This Symbiobacterium thermophilum (strain DSM 24528 / JCM 14929 / IAM 14863 / T) protein is DNA-directed RNA polymerase subunit beta.